The primary structure comprises 105 residues: Thioredoxin (105 aa).

The region spanning 2–105 (VKIVGDLTEF…KLEEAIKKYM (104 aa)) is the Thioredoxin domain. Catalysis depends on nucleophile residues C32 and C35. A disulfide bond links C32 and C35. S-nitrosocysteine is present on residues C69 and C73.

Belongs to the thioredoxin family. May be nitrosylated on several cysteine residues, depending on the oxidation state. Nitrosylated Cys-73 may serve as donor for nitrosylation of target proteins.

Its subcellular location is the nucleus. The protein localises to the cytoplasm. The protein resides in the secreted. In terms of biological role, participates in various redox reactions through the reversible oxidation of its active center dithiol to a disulfide and catalyzes dithiol-disulfide exchange reactions. Plays a role in the reversible S-nitrosylation of cysteine residues in target proteins, and thereby contributes to the response to intracellular nitric oxide. Nitrosylates the active site Cys of CASP3 in response to nitric oxide (NO), and thereby inhibits caspase-3 activity. Induces the FOS/JUN AP-1 DNA binding activity in ionizing radiation (IR) cells through its oxidation/reduction status and stimulates AP-1 transcriptional activity. The sequence is that of Thioredoxin (TXN) from Ophiophagus hannah (King cobra).